The chain runs to 249 residues: uncharacterized protein (249 aa).

The N-terminal stretch at 1 to 43 (MRRGRSRPAGAAPAALLLPLLLLLPLTGCDRLAAAPAEHAAAA) is a signal peptide. Positions 40–59 (AAAAGDPAQDADRGRRLPPV) are disordered. One can recognise a NodB homology domain in the interval 68–243 (PVVFLTYDDG…TIEEQGLRVG (176 aa)).

This is an uncharacterized protein from Streptomyces coelicolor (strain ATCC BAA-471 / A3(2) / M145).